Here is a 760-residue protein sequence, read N- to C-terminus: Xaa-Pro dipeptidyl-peptidase (760 aa).

Catalysis depends on charge relay system residues Ser349, Asp469, and His499.

Belongs to the peptidase S15 family. Homodimer.

It is found in the cytoplasm. It catalyses the reaction Hydrolyzes Xaa-Pro-|- bonds to release unblocked, N-terminal dipeptides from substrates including Ala-Pro-|-p-nitroanilide and (sequentially) Tyr-Pro-|-Phe-Pro-|-Gly-Pro-|-Ile.. In terms of biological role, removes N-terminal dipeptides sequentially from polypeptides having unsubstituted N-termini provided that the penultimate residue is proline. The sequence is that of Xaa-Pro dipeptidyl-peptidase from Streptococcus pyogenes serotype M4 (strain MGAS10750).